A 260-amino-acid polypeptide reads, in one-letter code: Carbonic anhydrase 2 (260 aa).

The residue at position 2 (Ser-2) is an N-acetylserine. At Ser-2 the chain carries Phosphoserine. The Alpha-carbonic anhydrase domain maps to 3-259 (HHWGYGKHNG…LKGRQVKASF (257 aa)). His-64 functions as the Proton donor/acceptor in the catalytic mechanism. Positions 94, 96, and 119 each coordinate Zn(2+). 2 positions are modified to phosphoserine: Ser-165 and Ser-172. 198 to 199 (TT) serves as a coordination point for substrate.

It belongs to the alpha-carbonic anhydrase family. In terms of assembly, interacts with SLC4A4 and SLC26A6. Interaction with SLC4A7 regulates SLC4A7 transporter activity. The cofactor is Zn(2+).

The protein localises to the cytoplasm. It localises to the cell membrane. It catalyses the reaction hydrogencarbonate + H(+) = CO2 + H2O. The catalysed reaction is urea = cyanamide + H2O. With respect to regulation, inhibited by acetazolamide. Its function is as follows. Catalyzes the reversible hydration of carbon dioxide. Can also hydrate cyanamide to urea. Involved in the regulation of fluid secretion into the anterior chamber of the eye. Essential for bone resorption and osteoclast differentiation. Contributes to intracellular pH regulation in the duodenal upper villous epithelium during proton-coupled peptide absorption. Stimulates the chloride-bicarbonate exchange activity of SLC26A6. This is Carbonic anhydrase 2 (CA2) from Oryctolagus cuniculus (Rabbit).